The chain runs to 372 residues: tRNA-specific 2-thiouridylase MnmA (372 aa).

ATP contacts are provided by residues 11 to 18 (GMSGGVDS) and Met37. The interval 97–99 (NPD) is interaction with target base in tRNA. Cys102 acts as the Nucleophile in catalysis. Cys102 and Cys199 are joined by a disulfide. Gly126 lines the ATP pocket. Residues 149 to 151 (KDQ) are interaction with tRNA. Residue Cys199 is the Cysteine persulfide intermediate of the active site. The tract at residues 309 to 310 (RY) is interaction with tRNA.

This sequence belongs to the MnmA/TRMU family.

It is found in the cytoplasm. The catalysed reaction is S-sulfanyl-L-cysteinyl-[protein] + uridine(34) in tRNA + AH2 + ATP = 2-thiouridine(34) in tRNA + L-cysteinyl-[protein] + A + AMP + diphosphate + H(+). Its function is as follows. Catalyzes the 2-thiolation of uridine at the wobble position (U34) of tRNA, leading to the formation of s(2)U34. The chain is tRNA-specific 2-thiouridylase MnmA from Staphylococcus aureus (strain bovine RF122 / ET3-1).